The sequence spans 151 residues: Ribonuclease H (151 aa).

The RNase H type-1 domain occupies 1–143 (MEEYVIYTDG…VDRVARKEAA (143 aa)). The Mg(2+) site is built by Asp9, Glu48, Asp71, and Asp135.

The protein belongs to the RNase H family. As to quaternary structure, monomer. It depends on Mg(2+) as a cofactor.

The protein resides in the cytoplasm. It catalyses the reaction Endonucleolytic cleavage to 5'-phosphomonoester.. Its function is as follows. Endonuclease that specifically degrades the RNA of RNA-DNA hybrids. The chain is Ribonuclease H from Neorickettsia sennetsu (strain ATCC VR-367 / Miyayama) (Ehrlichia sennetsu).